The chain runs to 75 residues: Putative snRNP Sm-like protein (75 aa).

Positions 4–75 (RPLDVIHRSL…NVLAISPTEE (72 aa)) constitute a Sm domain.

Belongs to the snRNP Sm proteins family.

The sequence is that of Putative snRNP Sm-like protein from Pyrococcus horikoshii (strain ATCC 700860 / DSM 12428 / JCM 9974 / NBRC 100139 / OT-3).